The following is a 290-amino-acid chain: Cilia- and flagella-associated protein 298 (290 aa).

Belongs to the CFAP298 family. Interacts with ZMYND10.

The protein localises to the cytoplasm. It localises to the cytoskeleton. Its subcellular location is the cilium basal body. Plays a role in motile cilium function, possibly by acting on outer dynein arm assembly. Seems to be important for initiation rather than maintenance of cilium motility. Required for correct positioning of cilia at the apical cell surface, suggesting an additional role in the planar cell polarity (PCP) pathway. May suppress canonical Wnt signaling activity. In Mus musculus (Mouse), this protein is Cilia- and flagella-associated protein 298.